Consider the following 226-residue polypeptide: Lipoprotein-releasing system ATP-binding protein LolD (226 aa).

Residues Leu6–Ile226 enclose the ABC transporter domain. Gly42 to Ser49 is an ATP binding site.

It belongs to the ABC transporter superfamily. Lipoprotein translocase (TC 3.A.1.125) family. In terms of assembly, the complex is composed of two ATP-binding proteins (LolD) and two transmembrane proteins (LolC and LolE).

It localises to the cell inner membrane. Its function is as follows. Part of the ABC transporter complex LolCDE involved in the translocation of mature outer membrane-directed lipoproteins, from the inner membrane to the periplasmic chaperone, LolA. Responsible for the formation of the LolA-lipoprotein complex in an ATP-dependent manner. The sequence is that of Lipoprotein-releasing system ATP-binding protein LolD from Treponema pallidum (strain Nichols).